The chain runs to 232 residues: Small ribosomal subunit protein uS3 (232 aa).

Residues 39-107 (VRQFLTKELQ…PAQINIAEVR (69 aa)) form the KH type-2 domain. The disordered stretch occupies residues 213 to 232 (AANAVEPKGDKPKKQRKGRK).

Belongs to the universal ribosomal protein uS3 family. Part of the 30S ribosomal subunit. Forms a tight complex with proteins S10 and S14.

Its function is as follows. Binds the lower part of the 30S subunit head. Binds mRNA in the 70S ribosome, positioning it for translation. This chain is Small ribosomal subunit protein uS3, found in Vibrio campbellii (strain ATCC BAA-1116).